Here is a 939-residue protein sequence, read N- to C-terminus: Isoleucine--tRNA ligase (939 aa).

The 'HIGH' region motif lies at 59-69; it reads PYANGDIHIGH. E570 lines the L-isoleucyl-5'-AMP pocket. Residues 611-615 carry the 'KMSKS' region motif; that stretch reads KMSKS. Residue K614 participates in ATP binding. The Zn(2+) site is built by C902, C905, C922, and C925.

The protein belongs to the class-I aminoacyl-tRNA synthetase family. IleS type 1 subfamily. In terms of assembly, monomer. It depends on Zn(2+) as a cofactor.

The protein localises to the cytoplasm. It carries out the reaction tRNA(Ile) + L-isoleucine + ATP = L-isoleucyl-tRNA(Ile) + AMP + diphosphate. Catalyzes the attachment of isoleucine to tRNA(Ile). As IleRS can inadvertently accommodate and process structurally similar amino acids such as valine, to avoid such errors it has two additional distinct tRNA(Ile)-dependent editing activities. One activity is designated as 'pretransfer' editing and involves the hydrolysis of activated Val-AMP. The other activity is designated 'posttransfer' editing and involves deacylation of mischarged Val-tRNA(Ile). This Nitrosomonas europaea (strain ATCC 19718 / CIP 103999 / KCTC 2705 / NBRC 14298) protein is Isoleucine--tRNA ligase.